A 362-amino-acid polypeptide reads, in one-letter code: Apelin receptor A (362 aa).

At methionine 1–leucine 34 the chain is on the extracellular side. An N-linked (GlcNAc...) asparagine glycan is attached at asparagine 19. 2 disulfide bridges follow: cysteine 23–cysteine 286 and cysteine 105–cysteine 184. A helical membrane pass occupies residues isoleucine 35 to phenylalanine 55. Topologically, residues threonine 56–asparagine 73 are cytoplasmic. A helical transmembrane segment spans residues leucine 74–leucine 94. Residues glycine 95–lysine 106 are Extracellular-facing. Residues isoleucine 107–serine 127 form a helical membrane-spanning segment. At phenylalanine 128–methionine 149 the chain is on the cytoplasmic side. Residues leucine 150–phenylalanine 170 form a helical membrane-spanning segment. Topologically, residues arginine 171–alanine 211 are extracellular. An N-linked (GlcNAc...) asparagine glycan is attached at asparagine 180. The chain crosses the membrane as a helical span at residues leucine 212 to valine 232. The Cytoplasmic portion of the chain corresponds to threonine 233–arginine 248. Residues leucine 249–valine 269 traverse the membrane as a helical segment. Topologically, residues leucine 270–asparagine 284 are extracellular. Residues serine 285–valine 305 traverse the membrane as a helical segment. The Cytoplasmic portion of the chain corresponds to asparagine 306 to valine 362.

This sequence belongs to the G-protein coupled receptor 1 family. First expressed before epiboly in dorsal precursors. During epiboly, expressed in the enveloping layer, yolk syncytial layer and migrating mesendoderm. During segmentation stages, expressed in epithelial structures such as adaxial cells, border cells of the newly formed somites, developing lens, otic vesicles and venous vasculature.

It localises to the cell membrane. Its function is as follows. G protein-coupled receptor for peptide hormones apelin (apln) and apelin receptor early endogenous ligand (apela), that plays a role in the regulation of normal cardiovascular function and fluid homeostasis. When acting as apelin receptor, activates both G(i) protein pathway that inhibits adenylate cyclase activity, and the beta-arrestin pathway that promotes internalization of the receptor. Also functions as mechanoreceptor that is activated by pathological stimuli in a G-protein-independent fashion to induce beta-arrestin signaling, hence eliciting cardiac hypertrophy. However, the presence of apelin ligand blunts cardiac hypertrophic induction from APLNR/APJ on response to pathological stimuli. Plays a key role in early development such as gastrulation, blood vessels formation and heart morphogenesis by acting as a receptor for apela hormone, promoting endoderm and mesendoderm cell migration and regulating the migration of cells fated to become myocardial progenitors, respectively. Positively regulates angioblast migration toward the embryonic midline, i.e. the position of the future vessel formation, during vasculogenesis. May promote sinus venosus (SV)-derived endothelial cells migration into the developing heart to promote coronary blood vessel development. Required for cardiovascular development, particularly for intersomitic vein angiogenesis by acting as a receptor for apln hormone. Also plays a role in various processes in adults such as regulation of blood vessel formation, blood pressure, heart contractility, and heart failure. Acts redundantly with agtrl1b in heart development. The sequence is that of Apelin receptor A (aplnra) from Danio rerio (Zebrafish).